The chain runs to 433 residues: Succinate--CoA ligase [ADP-forming] subunit beta, mitochondrial (433 aa).

The N-terminal 23 residues, 1–23 (MLTRSVLRKAPRAFSPFLQKRNL), are a transit peptide targeting the mitochondrion. Residues 31–273 (HDILRKFGVD…ISQEDPDEAR (243 aa)) enclose the ATP-grasp domain. Residues Lys-68, 75 to 77 (GRG), and Glu-136 contribute to the ATP site. Mg(2+) is bound by residues Asn-228 and Asp-242. Residues Asn-293 and 350–352 (GIV) contribute to the substrate site.

This sequence belongs to the succinate/malate CoA ligase beta subunit family. As to quaternary structure, heterodimer of an alpha and a beta subunit. It depends on Mg(2+) as a cofactor.

The protein resides in the mitochondrion. The catalysed reaction is succinate + ATP + CoA = succinyl-CoA + ADP + phosphate. Its pathway is carbohydrate metabolism; tricarboxylic acid cycle; succinate from succinyl-CoA (ligase route): step 1/1. In terms of biological role, succinyl-CoA synthetase functions in the citric acid cycle (TCA), coupling the hydrolysis of succinyl-CoA to the synthesis of ATP and thus represents the only step of substrate-level phosphorylation in the TCA. The beta subunit provides nucleotide specificity of the enzyme and binds the substrate succinate, while the binding sites for coenzyme A and phosphate are found in the alpha subunit. The sequence is that of Succinate--CoA ligase [ADP-forming] subunit beta, mitochondrial from Schizosaccharomyces pombe (strain 972 / ATCC 24843) (Fission yeast).